Here is a 607-residue protein sequence, read N- to C-terminus: Branchpoint-bridging protein (607 aa).

Composition is skewed to polar residues over residues 1–15 (MSWRNQGITGSNNIP) and 35–45 (VTPSAPSSVTN). Disordered regions lie at residues 1–92 (MSWR…TENK) and 134–155 (VPADGDRSPSPAPQYDNHGRRV). Basic and acidic residues predominate over residues 46-76 (GDRDRDRDGPVYSNDRDVKRGRSPERSEDGP). The KH domain occupies 201-281 (YVPVNDYPEI…EKVNKAKKLI (81 aa)). CCHC-type zinc fingers lie at residues 319-336 (QACQNCGQIGHRKYDCPE) and 344-361 (IICRVCGNAGHMARDCPD). Disordered regions lie at residues 363-390 (QRGASWRNDGPGAGRTAGRIGSSGGGDA) and 407-607 (AAPA…PPGA). A compositionally biased stretch (gly residues) spans 373–389 (PGAGRTAGRIGSSGGGD). Residues 472 to 500 (ARDRNERRHDDRDRGDSYYGGDRRHDDYG) are compositionally biased toward basic and acidic residues. Residues 521–533 (SAPAIPTAPAYPG) are compositionally biased toward low complexity. A compositionally biased stretch (gly residues) spans 534 to 545 (AYGGYPGYGAPP). Pro residues-rich tracts occupy residues 550-563 (APPPGLPPPPPGAP) and 581-607 (APPPPPPAAEAPPPPPMDLPPPPPPGA).

It belongs to the BBP/SF1 family.

It is found in the nucleus. Necessary for the splicing of pre-mRNA. Has a role in the recognition of the branch site (5'-UACUAAC-3'), the pyrimidine tract and the 3'-splice site at the 3'-end of introns. In Neurospora crassa (strain ATCC 24698 / 74-OR23-1A / CBS 708.71 / DSM 1257 / FGSC 987), this protein is Branchpoint-bridging protein (bbp-1).